We begin with the raw amino-acid sequence, 134 residues long: Early E3B 14.9 kDa protein (134 aa).

The first 19 residues, 1 to 19 (MQAMLPVILILLLPCIALA), serve as a signal peptide directing secretion. Residues 54–78 (YWIVIVGIINILSCTFFSITIYPTF) form a helical membrane-spanning segment.

This sequence belongs to the adenoviridae E3_14 family. Post-translationally, phosphorylated on serine; O-glycosylated, but not N-glycosylated.

The protein resides in the host membrane. Functionally, down-regulates the EGF receptor and prevents cytolysis by TNF. In Homo sapiens (Human), this protein is Early E3B 14.9 kDa protein.